The chain runs to 552 residues: Cytochrome P450 monooxyhenase eriI (552 aa).

A helical membrane pass occupies residues 9–26 (FALKASAAVAVLLLAAWV). N-linked (GlcNAc...) asparagine glycans are attached at residues N50 and N447. Heme is bound at residue C495.

The protein belongs to the cytochrome P450 family. Requires heme as cofactor.

The protein resides in the membrane. It carries out the reaction (-)-cyatha-3,12-diene + reduced [NADPH--hemoprotein reductase] + O2 = erinacol + oxidized [NADPH--hemoprotein reductase] + H2O + H(+). It functions in the pathway secondary metabolite biosynthesis. Cytochrome P450 monooxygenase; part of the gene cluster that mediates the biosynthesis of erinacines, cyathane-xylosides that show unique biological activities, including leishmanicidal activity, stimulating activity for nerve growth-factor synthesis, and agonistic activity toward the kappa opioid receptor. Within the pathway, eriI hydroxylates cyatha-3,12-diene at C-14 of the seven-membered ring to yield erinacol. The first step of the erinacines biosynthesis pathway is catalyzed by the geranylgeranyl diphosphate (GGPP) synthase eriE via conversion of farnesyl pyrophosphate and isopentyl pyrophosphate into geranylgeranyl pyrophosphate (GGPP). GGPP is then substrate of the diterpene cyclase eriG for the production of cyatha-3,12-diene. The cytochrome P450 monooxygenase eriI then hydroxylates cyatha-3,12-diene at C-14 of the seven-membered ring to produce erinacol, which is further hydroxylated at C-15 by the cytochrome P450 monooxygenase eriC to yield cyathadiol. The cytochrome P450 monooxygenase eriA then catalyzes C-11 hydroxylation in the presence of the short chain dehydrogenase/reductase (SDR) eriH, which leads to the production of cyathatriol. The acetyltransferase eriL converts cyathatriol into 11-O-acetyl-cyathatriol. The SDR eriH catalyzes further oxidation of 11-O-acetyl-cyathatriol into 1-O-acetylcyathin A3. Finally, the glycosyl transferase eriJ tranfers xylose from UDP-xylose onto C-14 of 11-O-acetyl-cyathatriol to form eracine Q. EriJ is also able to convert 11-O-acetyl-cyathatriol to eracine Q2 by using UDP-D-glucose as cosubstrate, but at a lower rate. Its function is as follows. Cytochrome P450 monooxygenase; part of the gene cluster that mediates the biosynthesis of erinacines, cyathane-xylosides that show unique biological activities, including leishmanicidal activity, stimulating activity for nerve growth-factor synthesis, and agonistic activity toward the kappa opioid receptor. The geranylgeranyl diphosphate (GGPP) synthase eriE catalyzes the first step in erinacines biosynthesis via conversion of farnesyl pyrophosphate and isopentyl pyrophosphate into geranylgeranyl pyrophosphate (GGPP). GGPP is then substrate of the diterpene cyclase eriG for the production of cyatha-3,12-diene. EriG is unable to use geranyl diphosphate (GPP) or farnesyl diphosphate (FPP) as substrates. The cytochrome P450 monooxygenase eriI then hydroxylates cyatha-3,12-diene at C-14 of the seven-membered ring to produce erinacol, which is further hydroxylated at C-15 by the cytochrome P450 monooxygenase eriC to yield cyathadiol. The cytochrome P450 monooxygenase eriA then catalyzes C-11 hydroxylation in the presence of the short chain dehydrogenase/reductase (SDR) eriH, which leads to the production of cyathatriol. The acetyltransferase eriL converts cyathatriol into 11-O-acetyl-cyathatriol. The SDR eriH catalyzes further oxidation of 11-O-acetyl-cyathatriol into 1-O-acetylcyathin A3. Finally, the glycosyl transferase eriJ tranfers xylose from UDP-xylose onto C-14 of 11-O-acetyl-cyathatriol to form eracine Q. EriJ is also able to convert 11-O-acetyl-cyathatriol to eracine Q2 by using UDP-D-glucose as cosubstrate, but at a lower rate. In the absence of eriL and eriJ, the SDR eriH is able to convert cyathatriol to cyathin A3; this is likely a switching mechanism in the biosynthesis of cyathins (C-14 ketogroup)and erinacines (C-14 glycosylated group). The roles of the SDR eriB, the polyprenyl transferase eriF and the dehydrogenase eriK have still to be identified. This is Cytochrome P450 monooxyhenase eriI from Hericium erinaceus (Lion's mane mushroom).